The sequence spans 418 residues: Probable basic-leucine zipper transcription factor E (418 aa).

Residues 8–47 (IQQIQQLHMLLQQQQQQQQQQQQQQQQQQQQLQQQNFQLT) are a coiled coil. Composition is skewed to low complexity over residues 51–71 (FQIPVNNNNNNNNNSNNNNNN) and 95–134 (INTTTTTTNNNNNNNNNNNNNNNNNNNNNNNNNNNNNNNT). 4 disordered regions span residues 51 to 75 (FQIPVNNNNNNNNNSNNNNNNETAF), 95 to 149 (INTT…KKQK), 165 to 196 (PTAAVKKKPPAKKSAKNAASQPTSPTLSTTNT), and 211 to 252 (KNQE…KNRR). A compositionally biased stretch (basic residues) spans 169-179 (VKKKPPAKKSA). A compositionally biased stretch (low complexity) spans 180 to 196 (KNAASQPTSPTLSTTNT). The span at 220–239 (DNSEESDSDEEDFENGDNEN) shows a compositional bias: acidic residues. Residues 246–309 (GDRKNRRLLK…QLMKDKVRYL (64 aa)) enclose the bZIP domain. The segment at 248-268 (RKNRRLLKNREAAQLFRQRQK) is basic motif. Residues 274–281 (LESKASSL) are leucine-zipper. The stretch at 324–362 (SVVNQDNINNLNNNLNGLQNQQNNNNNNNNNNNNNNNNN) forms a coiled coil. The disordered stretch occupies residues 336–418 (NNLNGLQNQQ…DSLLFNLPPD (83 aa)).

The protein belongs to the bZIP family.

It is found in the nucleus. Functionally, probable transcriptional regulator. The chain is Probable basic-leucine zipper transcription factor E (bzpE) from Dictyostelium discoideum (Social amoeba).